The chain runs to 405 residues: 3-isopropylmalate dehydrogenase 2, chloroplastic (405 aa).

The transit peptide at 1-33 (MAAALQTNIRTVKVPATFRAVSKQSLAPFRVRC) directs the protein to the chloroplast. A Phosphoserine modification is found at serine 70. 114 to 129 (IGGYKWDNNEKHLRPE) contacts NAD(+). Substrate is bound by residues arginine 136, arginine 146, and arginine 174. Asparagine 234 contacts NAD(+). Aspartate 264 lines the substrate pocket. Aspartate 264 contacts Mg(2+). Asparagine 265 is a binding site for NAD(+). 2 residues coordinate Mg(2+): aspartate 288 and aspartate 292. NAD(+) is bound at residue 318-334 (EPIHGSAPDIAGQDKAN).

It belongs to the isocitrate and isopropylmalate dehydrogenases family. In terms of assembly, homodimer. The cofactor is Mg(2+). It depends on Mn(2+) as a cofactor. In terms of tissue distribution, expressed at low levels in seedlings, cotyledons, hypocotyls, flowers, roots, pollen, leaves and stems.

Its subcellular location is the plastid. It is found in the chloroplast stroma. It catalyses the reaction (2R,3S)-3-isopropylmalate + NAD(+) = 4-methyl-2-oxopentanoate + CO2 + NADH. It functions in the pathway amino-acid biosynthesis; L-leucine biosynthesis; L-leucine from 3-methyl-2-oxobutanoate: step 3/4. With respect to regulation, regulated by a thiol-based redox modification. Functionally, involved in leucine biosynthesis; catalyzes the oxidative decarboxylation step in leucine biosynthesis (primary metabolism). Catalyzes the oxidation of 3-carboxy-2-hydroxy-4-methylpentanoate (3-isopropylmalate, 3-IPM) to 3-carboxy-4-methyl-2-oxopentanoate. The product decarboxylates to 4-methyl-2 oxopentanoate. Required during pollen development and involved in embryo sac development. The protein is 3-isopropylmalate dehydrogenase 2, chloroplastic of Arabidopsis thaliana (Mouse-ear cress).